The sequence spans 431 residues: UPF0597 protein BVU_2091 (431 aa).

Belongs to the UPF0597 family.

This Phocaeicola vulgatus (strain ATCC 8482 / DSM 1447 / JCM 5826 / CCUG 4940 / NBRC 14291 / NCTC 11154) (Bacteroides vulgatus) protein is UPF0597 protein BVU_2091.